Here is a 305-residue protein sequence, read N- to C-terminus: tRNA pseudouridine synthase B (305 aa).

The active-site Nucleophile is aspartate 39.

This sequence belongs to the pseudouridine synthase TruB family. Type 1 subfamily.

The catalysed reaction is uridine(55) in tRNA = pseudouridine(55) in tRNA. Its function is as follows. Responsible for synthesis of pseudouridine from uracil-55 in the psi GC loop of transfer RNAs. The chain is tRNA pseudouridine synthase B from Staphylococcus saprophyticus subsp. saprophyticus (strain ATCC 15305 / DSM 20229 / NCIMB 8711 / NCTC 7292 / S-41).